Consider the following 127-residue polypeptide: Putative truncated L-serine dehydratase YIL168W (127 aa).

The residue at position 39 (Lys39) is an N6-(pyridoxal phosphate)lysine.

This sequence belongs to the serine/threonine dehydratase family. It depends on pyridoxal 5'-phosphate as a cofactor.

Its subcellular location is the cytoplasm. The enzyme catalyses L-serine = pyruvate + NH4(+). It participates in carbohydrate biosynthesis; gluconeogenesis. The chain is Putative truncated L-serine dehydratase YIL168W from Saccharomyces cerevisiae (strain ATCC 204508 / S288c) (Baker's yeast).